A 343-amino-acid polypeptide reads, in one-letter code: Dihydroorotase (343 aa).

Zn(2+) contacts are provided by His13 and His15. Residues 15–17 and Asn41 contribute to the substrate site; that span reads HLR. Positions 99, 136, and 174 each coordinate Zn(2+). N6-carboxylysine is present on Lys99. His136 contacts substrate. A substrate-binding site is contributed by Leu219. A Zn(2+)-binding site is contributed by Asp247. Residue Asp247 is part of the active site. Substrate contacts are provided by His251 and Ala263.

The protein belongs to the metallo-dependent hydrolases superfamily. DHOase family. Class II DHOase subfamily. Homodimer. It depends on Zn(2+) as a cofactor.

It catalyses the reaction (S)-dihydroorotate + H2O = N-carbamoyl-L-aspartate + H(+). The protein operates within pyrimidine metabolism; UMP biosynthesis via de novo pathway; (S)-dihydroorotate from bicarbonate: step 3/3. Functionally, catalyzes the reversible cyclization of carbamoyl aspartate to dihydroorotate. This chain is Dihydroorotase, found in Shewanella baltica (strain OS195).